Reading from the N-terminus, the 953-residue chain is MRPLPTGIYTPLPCFFHENEDIDIEALQSHVKFIASAGTIPVVSGSMGEAIHLNREEKKTIIRSARVALDEVNLHDVPIVAGAGGASTRESIELCKDAAEAGADYVMVIPPGYYAGALLADTSSIKKFFVDIAEASPLPVIIYNFPAVSGGIDMDSDLIVQIIQSSANICGVKLTCANVGKLTRIMAQVSRPEFQAAFPRSSATPFRAIDGFIDFLLPSISVGSAGAISGLPNIAPKSCVKLWNLCQDSGSSKQATELQNLIALADGVALKIGIAGMKKLLHRHFGRKVACDMPNGPPCLRCTNKYQECTFEEGPGPRKRARLCEQTETFGTCEQPDGWQDLLTETRPNIGQSEDLEAVSPQGSLLGANQELESTSPRTSHSSLSQDDTASLHSRSSLSSSPGRFPPSQKLVATSDSPSQINSLEFIPDAFSFYIGPTGVTDIHILSHQKYNDQNVSLPKVNGLKYRIMDNPGQKEMATVDFSPPTVFGITDHSLLEKAEPKLDPQLTENGWPRLWAMMDPTAAWHLIKLYSRYIDPYFPILSSHQIPSSSAELNKMPLALLTAICATALPFVMYDDSLYTMLLNPPSSEELYRLCWLCISQELHAPSLATLQACLLLQQRLPTNMYLSDTAFAWTLMATSLAVAQTIGLHRDTGSWTSIPAWEKRLRRRLWWGLYAMEKWVALARGMPSHLGDDDYDVSMLKADDIQDTLSDSPDTQSHIYHLSNLSTILSDIQRSFYSVKAIGKTSNDLQYSLDLARPMRVRLKDWRDNLPSNLRPVSNAVISGEDLDGNGSLYLSYIVTHVALLRALLRPLDRWPAIIKVNKEEPEATYEGAKAVVTGALLCVKEFVEFVERLTGAQWNAFWHSWSRPNFAIAGSFMVHLLQIVTPPNQTDSQSMPELLKYSFEKEHTELQDWIRRWRWATRISANGAAGVKGLTNLGFIKVETLIGNGT.

The disordered stretch occupies residues 371–418 (ELESTSPRTSHSSLSQDDTASLHSRSSLSSSPGRFPPSQKLVATSDSP). Residues 374–408 (STSPRTSHSSLSQDDTASLHSRSSLSSSPGRFPPS) are compositionally biased toward low complexity.

It is found in the nucleus. In terms of biological role, transcriptional regulator; part of the gene cluster that mediates the biosynthesis of communesins, a prominent class of indole alkaloids with great potential as pharmaceuticals. In Penicillium expansum (Blue mold rot fungus), this protein is Communesin biosynthesis cluster-specific transcription factor cnsN.